Consider the following 280-residue polypeptide: Acetyl-coenzyme A carboxylase carboxyl transferase subunit beta (280 aa).

A CoA carboxyltransferase N-terminal domain is found at 28 to 280 (IMTKCPSCRT…TLTKLLAMHQ (253 aa)). The Zn(2+) site is built by C32, C35, C51, and C54. The C4-type zinc-finger motif lies at 32 to 54 (CPSCRTIMYTKDLKKNLSVCRTC).

It belongs to the AccD/PCCB family. Acetyl-CoA carboxylase is a heterohexamer composed of biotin carboxyl carrier protein (AccB), biotin carboxylase (AccC) and two subunits each of ACCase subunit alpha (AccA) and ACCase subunit beta (AccD). Requires Zn(2+) as cofactor.

It localises to the cytoplasm. It carries out the reaction N(6)-carboxybiotinyl-L-lysyl-[protein] + acetyl-CoA = N(6)-biotinyl-L-lysyl-[protein] + malonyl-CoA. The protein operates within lipid metabolism; malonyl-CoA biosynthesis; malonyl-CoA from acetyl-CoA: step 1/1. Functionally, component of the acetyl coenzyme A carboxylase (ACC) complex. Biotin carboxylase (BC) catalyzes the carboxylation of biotin on its carrier protein (BCCP) and then the CO(2) group is transferred by the transcarboxylase to acetyl-CoA to form malonyl-CoA. The chain is Acetyl-coenzyme A carboxylase carboxyl transferase subunit beta from Shouchella clausii (strain KSM-K16) (Alkalihalobacillus clausii).